Consider the following 1167-residue polypeptide: MKKSLIALTTALSFGLAAAQTAAPVSAPQVPALTDVPAGHWAKDAIDRLVSRGVILGYPDGTFRGTQNLTRYEAAIIIARLLDQMRDGETPAGMTAEDMTALQNAIQELAADLAALGVRVSDLEANAVSKDDFARLEARIEEVAAAGGEQGATEALQGQIDDLTARVDEYDALRADVDDNASSIAALNDLTVLLNQDILDLQDRVSAVEAAQADFVQRSDFDALGGRVTTVETRVETVNNSLTGRIAALERNAFSVKPSLTIGYSVSRTSRNFDVDRLFPLNADGTVANNAFTSGGIDTDTGAQRRDFGDFGNASDPVVAGAAGLYGFADGVSYTVYFTDGSTATFDGLNPADYKVPTGKVIDTTKGRNGFGFNNLARYKEGSTDIGISLGFDTSGQFSQVTSGTGGSLFSTAGRLQVNQIDLNFGLVTGLPSDAYVDTNGNGKKDDGEATGRGTYLGSGGTAAILRDPAGNVYRPVFFRFKNATTQFSVGNNPVIVTLGQQQKFYFSDYVFDNNYDGRGDGFTVTVDGSNVPVIGAWKPQIKGVYGSRSGLDGTAEAGYGVYYRGVRAQITPVGTLTAGIHYAQEGRDMFGAAQNTTSTPSDVTTYGADLHGKAFGVELHSEYATSRVRPNTANAAVQTSNAFYARVATRKDNLAFDLNTPAAKFGNDTFGVSLYDLNYRKIDAGYNNVAGISEYGYGSYSRTSAQNIAYNPDTGVTAPFANLDRQAYTDANNDGTSDRNADGTVVATNTKIGQMGFGVKAAANLGPVAIGGYYDTSTGANGDNANRMTEAGGSAKVAYSIFSLRGTYNTLDSNRPQIYRDAAGTQIIGDAKVRRYAVQADVTPGLGLFVGAYYRDVNVNGVRSTTDRGLLGRGYLASSFEPGVGNNAYRTGLRCADNNFGTGTRDIDGVGGVLNPAVNLDQSRTATCFTSYGVEAGHAGDNANALVKDLFFRVGYSRVYVPTTATATTGDFSGSVTYGDARYDRKVGVANVRLAGSFSTTNTQLDSRPAGTRGAVGLIVRTDPLENVPFRPQFNGQVGYYTADNRVAAGNYNANATKYGAGVVLNDFLLPQTKIGVRYDGYMAQNRQYTPFDGDGTQGYFSDANNNRRTNLNGVYVEGAYQDLIFSYGTYTLSQKDLNGVEYGSGINNGQPARGQTFKISYKVNF.

Positions 1 to 22 are cleaved as a signal peptide; the sequence is MKKSLIALTTALSFGLAAAQTA. The Periplasmic portion of the chain corresponds to 23 to 254; sequence APVSAPQVPA…RIAALERNAF (232 aa). An SLH domain is found at 29–92; the sequence is QVPALTDVPA…DQMRDGETPA (64 aa). A beta stranded transmembrane segment spans residues 255–268; that stretch reads SVKPSLTIGYSVSR. The Extracellular segment spans residues 269–377; that stretch reads TSRNFDVDRL…RNGFGFNNLA (109 aa). Positions 274, 276, 305, 308, 310, and 381 each coordinate Cu(2+). The chain crosses the membrane as a beta stranded span at residues 378–403; sequence RYKEGSTDIGISLGFDTSGQFSQVTS. Topologically, residues 404–416 are periplasmic; that stretch reads GTGGSLFSTAGRL. The beta stranded transmembrane segment at 417–428 threads the bilayer; that stretch reads QVNQIDLNFGLV. Residues 429–471 are Extracellular-facing; sequence TGLPSDAYVDTNGNGKKDDGEATGRGTYLGSGGTAAILRDPAG. Residues D438, N442, K444, D446, and E449 each coordinate Fe(3+). Residues 472-490 traverse the membrane as a beta stranded segment; it reads NVYRPVFFRFKNATTQFSV. Topologically, residues 491–494 are periplasmic; it reads GNNP. The chain crosses the membrane as a beta stranded span at residues 495 to 500; the sequence is VIVTLG. Residues 501 to 519 are Extracellular-facing; it reads QQQKFYFSDYVFDNNYDGR. Residues D513 and N515 each contribute to the Cu(2+) site. Residues 520–528 form a beta stranded membrane-spanning segment; the sequence is GDGFTVTVD. Topologically, residues 529–540 are periplasmic; it reads GSNVPVIGAWKP. Residues 541-549 form a beta stranded membrane-spanning segment; sequence QIKGVYGSR. R549, G551, D553, and G559 together coordinate Cu(2+). Residues 550 to 561 are Extracellular-facing; the sequence is SGLDGTAEAGYG. A beta stranded membrane pass occupies residues 562–571; that stretch reads VYYRGVRAQI. Residues 572 to 577 lie on the Periplasmic side of the membrane; it reads TPVGTL. The chain crosses the membrane as a beta stranded span at residues 578 to 588; that stretch reads TAGIHYAQEGR. Residues 589-601 are Extracellular-facing; it reads DMFGAAQNTTSTP. Residues 602–615 form a beta stranded membrane-spanning segment; it reads SDVTTYGADLHGKA. Over 616 to 617 the chain is Periplasmic; it reads FG. The beta stranded transmembrane segment at 618–630 threads the bilayer; the sequence is VELHSEYATSRVR. Residue S622 participates in deinoxanthin binding. Residues 631–638 lie on the Extracellular side of the membrane; that stretch reads PNTANAAV. Residues 639–649 form a beta stranded membrane-spanning segment; that stretch reads QTSNAFYARVA. The Periplasmic portion of the chain corresponds to 650 to 670; the sequence is TRKDNLAFDLNTPAAKFGNDT. The beta stranded transmembrane segment at 671 to 682 threads the bilayer; sequence FGVSLYDLNYRK. The Extracellular segment spans residues 683–753; that stretch reads IDAGYNNVAG…GTVVATNTKI (71 aa). Residue G716 coordinates Cu(2+). The beta stranded transmembrane segment at 754 to 766 threads the bilayer; that stretch reads GQMGFGVKAAANL. At 767 to 768 the chain is on the periplasmic side; the sequence is GP. A beta stranded transmembrane segment spans residues 769 to 779; it reads VAIGGYYDTST. At 780–788 the chain is on the extracellular side; sequence GANGDNANR. Residues 789–798 traverse the membrane as a beta stranded segment; sequence MTEAGGSAKV. Residues 799–802 are Periplasmic-facing; that stretch reads AYSI. The beta stranded transmembrane segment at 803 to 814 threads the bilayer; it reads FSLRGTYNTLDS. Residues 815–831 are Extracellular-facing; sequence NRPQIYRDAAGTQIIGD. A beta stranded transmembrane segment spans residues 832–843; it reads AKVRRYAVQADV. Over 844–848 the chain is Periplasmic; that stretch reads TPGLG. The chain crosses the membrane as a beta stranded span at residues 849–860; that stretch reads LFVGAYYRDVNV. The Extracellular segment spans residues 861–931; it reads NGVRSTTDRG…DQSRTATCFT (71 aa). The beta stranded transmembrane segment at 932-940 threads the bilayer; sequence SYGVEAGHA. Residues 941 to 949 lie on the Periplasmic side of the membrane; the sequence is GDNANALVK. Residues 950-960 form a beta stranded membrane-spanning segment; sequence DLFFRVGYSRV. Residues 961–976 are Extracellular-facing; the sequence is YVPTTATATTGDFSGS. A beta stranded membrane pass occupies residues 977-988; sequence VTYGDARYDRKV. Residues 989-990 are Periplasmic-facing; the sequence is GV. Residues 991 to 1002 form a beta stranded membrane-spanning segment; the sequence is ANVRLAGSFSTT. Residues 1003–1014 are Extracellular-facing; the sequence is NTQLDSRPAGTR. Residues 1015–1023 form a beta stranded membrane-spanning segment; that stretch reads GAVGLIVRT. Over 1024–1032 the chain is Periplasmic; sequence DPLENVPFR. A beta stranded membrane pass occupies residues 1033–1046; sequence PQFNGQVGYYTADN. Topologically, residues 1047–1052 are extracellular; that stretch reads RVAAGN. Residues 1053-1066 traverse the membrane as a beta stranded segment; sequence YNANATKYGAGVVL. Residues 1067-1073 lie on the Periplasmic side of the membrane; that stretch reads NDFLLPQ. A beta stranded transmembrane segment spans residues 1074-1086; the sequence is TKIGVRYDGYMAQ. Residues 1087–1108 lie on the Extracellular side of the membrane; sequence NRQYTPFDGDGTQGYFSDANNN. A beta stranded membrane pass occupies residues 1109 to 1122; sequence RRTNLNGVYVEGAY. Residues 1123–1124 lie on the Periplasmic side of the membrane; it reads QD. A beta stranded membrane pass occupies residues 1125–1138; that stretch reads LIFSYGTYTLSQKD. Over 1139 to 1153 the chain is Extracellular; the sequence is LNGVEYGSGINNGQP. The beta stranded transmembrane segment at 1154 to 1166 threads the bilayer; it reads ARGQTFKISYKVN. F1167 is a topological domain (periplasmic).

In terms of assembly, homotrimer. Part of a heterooligomeric complex resulting in the main assembly named S-layer deinoxanthin-binding complex (SDBC) which is composed of six different subunits, namely SlpA, DR_2310, DR_0505, DR_A0283, DR_A0282, and DR_A0281.

It is found in the cell envelope. It localises to the cell outer membrane. It carries out the reaction L-arginine(in) = L-arginine(out). The enzyme catalyses L-lysine(in) = L-lysine(out). It catalyses the reaction L-glutamate(out) = L-glutamate(in). In terms of biological role, plays an important role in the structural organization and integrity of the cell envelope, bridging the outer membrane to the peptidoglyan layer. Is a highly abundant molecule in the D.radiodurans cell envelope but is not a fundamental component of the S-layer. Binds the carotenoid deinoxanthin, a strong protective antioxidant specific of this bacterium, and could be part of the first lane of defense against UV radiation, especially under desiccation. Appears to be a nonselective channel. Is able to transport charged amino acids such as Lys, Arg and Glu; the large dimension of the pore points toward the physiological importance of the SDBC complex in assisting and allowing the exchange of substances, including nutrients, with the surrounding environment. This Deinococcus radiodurans (strain ATCC 13939 / DSM 20539 / JCM 16871 / CCUG 27074 / LMG 4051 / NBRC 15346 / NCIMB 9279 / VKM B-1422 / R1) protein is Outer membrane protein SlpA.